A 160-amino-acid polypeptide reads, in one-letter code: Small ribosomal subunit protein bS6 (160 aa).

This sequence belongs to the bacterial ribosomal protein bS6 family.

Its function is as follows. Binds together with bS18 to 16S ribosomal RNA. The sequence is that of Small ribosomal subunit protein bS6 from Ureaplasma urealyticum serovar 10 (strain ATCC 33699 / Western).